A 566-amino-acid polypeptide reads, in one-letter code: Proline--tRNA ligase (566 aa).

This sequence belongs to the class-II aminoacyl-tRNA synthetase family. ProS type 1 subfamily. As to quaternary structure, homodimer.

Its subcellular location is the cytoplasm. The enzyme catalyses tRNA(Pro) + L-proline + ATP = L-prolyl-tRNA(Pro) + AMP + diphosphate. Its function is as follows. Catalyzes the attachment of proline to tRNA(Pro) in a two-step reaction: proline is first activated by ATP to form Pro-AMP and then transferred to the acceptor end of tRNA(Pro). As ProRS can inadvertently accommodate and process non-cognate amino acids such as alanine and cysteine, to avoid such errors it has two additional distinct editing activities against alanine. One activity is designated as 'pretransfer' editing and involves the tRNA(Pro)-independent hydrolysis of activated Ala-AMP. The other activity is designated 'posttransfer' editing and involves deacylation of mischarged Ala-tRNA(Pro). The misacylated Cys-tRNA(Pro) is not edited by ProRS. The protein is Proline--tRNA ligase of Staphylococcus saprophyticus subsp. saprophyticus (strain ATCC 15305 / DSM 20229 / NCIMB 8711 / NCTC 7292 / S-41).